Reading from the N-terminus, the 59-residue chain is UPF0434 protein PBPRA2383 (59 aa).

It belongs to the UPF0434 family.

The sequence is that of UPF0434 protein PBPRA2383 from Photobacterium profundum (strain SS9).